The following is a 527-amino-acid chain: Probable malate:quinone oxidoreductase (527 aa).

The protein belongs to the MQO family. FAD is required as a cofactor.

It carries out the reaction (S)-malate + a quinone = a quinol + oxaloacetate. Its pathway is carbohydrate metabolism; tricarboxylic acid cycle; oxaloacetate from (S)-malate (quinone route): step 1/1. In Pectobacterium carotovorum subsp. carotovorum (strain PC1), this protein is Probable malate:quinone oxidoreductase.